We begin with the raw amino-acid sequence, 265 residues long: Thymidine kinase 2, mitochondrial (265 aa).

The transit peptide at 1–33 directs the protein to the mitochondrion; that stretch reads MLLRPLRGWAALALRCFEPGSPGSPASGPGSRR. Low complexity predominate over residues 21–31; the sequence is SPGSPASGPGS. The segment at 21–45 is disordered; that stretch reads SPGSPASGPGSRRVQRGAWPSDKER. Residue 57 to 65 coordinates ATP; that stretch reads GNIASGKTT. Glutamate 133 acts as the Proton acceptor in catalysis.

The protein belongs to the DCK/DGK family. In terms of assembly, homodimer.

It is found in the mitochondrion. It carries out the reaction thymidine + ATP = dTMP + ADP + H(+). The enzyme catalyses 2'-deoxycytidine + ATP = dCMP + ADP + H(+). It catalyses the reaction 2'-deoxyuridine + ATP = dUMP + ADP + H(+). In terms of biological role, phosphorylates thymidine, deoxycytidine, and deoxyuridine in the mitochondrial matrix. In non-replicating cells, where cytosolic dNTP synthesis is down-regulated, mtDNA synthesis depends solely on TK2 and DGUOK. The polypeptide is Thymidine kinase 2, mitochondrial (TK2) (Macaca fascicularis (Crab-eating macaque)).